Consider the following 333-residue polypeptide: Glycerol-3-phosphate dehydrogenase [NAD(P)+] (333 aa).

NADPH contacts are provided by Phe19, Arg40, Arg41, and Lys113. Lys113 and Gly141 together coordinate sn-glycerol 3-phosphate. Ala145 contributes to the NADPH binding site. Sn-glycerol 3-phosphate contacts are provided by Lys196, Asp249, Ser259, Arg260, and Asn261. The Proton acceptor role is filled by Lys196. Arg260 lines the NADPH pocket. Positions 282 and 283 each coordinate NADPH.

The protein belongs to the NAD-dependent glycerol-3-phosphate dehydrogenase family.

It is found in the cytoplasm. The enzyme catalyses sn-glycerol 3-phosphate + NAD(+) = dihydroxyacetone phosphate + NADH + H(+). It catalyses the reaction sn-glycerol 3-phosphate + NADP(+) = dihydroxyacetone phosphate + NADPH + H(+). Its pathway is membrane lipid metabolism; glycerophospholipid metabolism. In terms of biological role, catalyzes the reduction of the glycolytic intermediate dihydroxyacetone phosphate (DHAP) to sn-glycerol 3-phosphate (G3P), the key precursor for phospholipid synthesis. In Sinorhizobium fredii (strain NBRC 101917 / NGR234), this protein is Glycerol-3-phosphate dehydrogenase [NAD(P)+].